Consider the following 347-residue polypeptide: Heat-inducible transcription repressor HrcA (347 aa).

Belongs to the HrcA family.

Negative regulator of class I heat shock genes (grpE-dnaK-dnaJ and groELS operons). Prevents heat-shock induction of these operons. The sequence is that of Heat-inducible transcription repressor HrcA from Lactococcus lactis subsp. cremoris (strain MG1363).